Reading from the N-terminus, the 923-residue chain is Neuropilin-1 (923 aa).

An N-terminal signal peptide occupies residues 1–21 (MERGLPLLCATLALALALAGA). The Extracellular segment spans residues 22 to 856 (FRSDKCGGTI…PGNVLKTLDP (835 aa)). Cystine bridges form between cysteine 27–cysteine 54, cysteine 82–cysteine 104, and cysteine 147–cysteine 173. CUB domains are found at residues 27–141 (CGGT…YEIF) and 147–265 (CSQN…YSVL). N-linked (GlcNAc...) asparagine glycosylation occurs at asparagine 150. Glutamate 195, aspartate 209, and aspartate 250 together coordinate Ca(2+). A disulfide bridge connects residues cysteine 206 and cysteine 228. N-linked (GlcNAc...) asparagine glycans are attached at residues asparagine 261, asparagine 300, and asparagine 522. 2 disulfide bridges follow: cysteine 275/cysteine 424 and cysteine 431/cysteine 583. 2 F5/8 type C domains span residues 275–424 (CMEA…VYGC) and 431–583 (CSGM…LLGC). An O-linked (Xyl...) (chondroitin sulfate) serine; alternate glycan is attached at serine 612. The O-linked (Xyl...) (heparan sulfate) serine; alternate glycan is linked to serine 612. Residues 645–811 (TYGFNCEFGW…NHISQEDCAK (167 aa)) enclose the MAM domain. The interval 820–845 (TEIKIDETGSTPGYEGEGEGDKNISR) is disordered. Serine 829 carries O-linked (Xyl...) (chondroitin sulfate) serine glycosylation. Asparagine 842 carries an N-linked (GlcNAc...) asparagine glycan. A helical membrane pass occupies residues 857–879 (ILITIIAMSALGVLLGAVCGVVL). Residues 880-923 (YCACWHNGMSERNLSALENYNFELVDGVKLKKDKLNPQSNYSEA) are Cytoplasmic-facing. Serine 894 bears the Phosphoserine mark.

This sequence belongs to the neuropilin family. Homodimer, and heterodimer with NRP2. Binds PLXNB1. Interacts with FER. Interacts with VEGFA. Interacts with ABCB8/MITOSUR in mitochondria. In terms of tissue distribution, nervous system.

Its subcellular location is the mitochondrion membrane. The protein localises to the cell membrane. It localises to the cytoplasm. In terms of biological role, receptor involved in the development of the cardiovascular system, in angiogenesis, in the formation of certain neuronal circuits and in organogenesis outside the nervous system. Mediates the chemorepulsant activity of semaphorins. Recognizes a C-end rule (CendR) motif R/KXXR/K on its ligands which causes cellular internalization and vascular leakage. Binds to semaphorin 3A (SEMA3A), the PLGF-2 isoform of PGF, the VEGF165 isoform of VEGFA and VEGFB. Coexpression with KDR results in increased VEGF165 binding to KDR as well as increased chemotaxis. Regulates VEGF-induced angiogenesis. Binding to VEGFA initiates a signaling pathway needed for motor neuron axon guidance and cell body migration, including for the caudal migration of facial motor neurons from rhombomere 4 to rhombomere 6 during embryonic development. Regulates mitochondrial iron transport via interaction with ABCB8/MITOSUR. This chain is Neuropilin-1, found in Mus musculus (Mouse).